The following is a 218-amino-acid chain: Ribose-5-phosphate isomerase A (218 aa).

Residues 28 to 31, 81 to 84, and 94 to 97 each bind substrate; these read TGST, DGAD, and KGGG. The active-site Proton acceptor is the Glu103. Lys121 contributes to the substrate binding site.

It belongs to the ribose 5-phosphate isomerase family. Homodimer.

The enzyme catalyses aldehydo-D-ribose 5-phosphate = D-ribulose 5-phosphate. It participates in carbohydrate degradation; pentose phosphate pathway; D-ribose 5-phosphate from D-ribulose 5-phosphate (non-oxidative stage): step 1/1. Catalyzes the reversible conversion of ribose-5-phosphate to ribulose 5-phosphate. This is Ribose-5-phosphate isomerase A from Shewanella sediminis (strain HAW-EB3).